Here is a 1054-residue protein sequence, read N- to C-terminus: Translation initiation factor IF-2 (1054 aa).

2 disordered regions span residues 48–390 (RSKL…LDLD) and 409–458 (LARP…GTEP). Positions 65 to 76 (KPPSESLPPEPP) are enriched in pro residues. The span at 160 to 169 (SEATQKPETV) shows a compositional bias: polar residues. Residues 179 to 193 (SESAAAKASGSEPSP) are compositionally biased toward low complexity. Composition is skewed to pro residues over residues 221–235 (PQKA…PSEA) and 304–316 (PTRP…PPEP). The segment covering 365–378 (RAARVQAKRKRSRR) has biased composition (basic residues). A compositionally biased stretch (low complexity) spans 421-437 (PPAATAAPPARPRPAAR). Residues 545 to 718 (SRPPVVTIMG…LLVADVAELQ (174 aa)) enclose the tr-type G domain. The interval 554 to 561 (GHVDHGKT) is G1. 554 to 561 (GHVDHGKT) lines the GTP pocket. A G2 region spans residues 579 to 583 (GITQR). Residues 604–607 (DTPG) are G3. GTP is bound by residues 604–608 (DTPGH) and 658–661 (NKID). Residues 658–661 (NKID) form a G4 region. A G5 region spans residues 694-696 (SAL).

Belongs to the TRAFAC class translation factor GTPase superfamily. Classic translation factor GTPase family. IF-2 subfamily.

The protein resides in the cytoplasm. Functionally, one of the essential components for the initiation of protein synthesis. Protects formylmethionyl-tRNA from spontaneous hydrolysis and promotes its binding to the 30S ribosomal subunits. Also involved in the hydrolysis of GTP during the formation of the 70S ribosomal complex. The sequence is that of Translation initiation factor IF-2 from Synechococcus sp. (strain JA-2-3B'a(2-13)) (Cyanobacteria bacterium Yellowstone B-Prime).